Consider the following 473-residue polypeptide: MATQPTPLTAVVLAAGQGTRMKSARPKVLHELCGRPMLHYVVDAALAAGASDVVVVVGHGRDEVSAALDKAFGAQGKKVRTALQPQQRGTGDAVRCAMPHIDATSEAILILCGDTPLLDPEQLTQLRGALDRAGDAPIAMLTAEVSDPTGYGRILRDASGRVIGIREHKDATAEERAITEVNPGVYLARSGFLGRALAGLTTDNAQGELYLTDIVAQAAKAGGAAAVVARDVGSLVGINDRAQLAAAEEVLYGRIADRLRKSGVTIRTSARIDAGVLVEPDAVIEHAVVLRGRTRVGAGARIDVGSVLTDVVVEAGASVKPYTVASQSSIGAGAQIGPFSHLRPESQIEADAHIGNFVETKKTVVRKGAKANHLAYLGDGDIGEGANVGAGTIFCNYDGFRKHRTEIGAGAFIGSDSQIVAPVKIGAGAYVATGTTVTRDVPDEALAIGRVKQENKEGYATRLKARLKDAAKK.

The pyrophosphorylase stretch occupies residues 1–241 (MATQPTPLTA…VGSLVGINDR (241 aa)). UDP-N-acetyl-alpha-D-glucosamine-binding positions include 13–16 (LAAG), Lys-27, Gln-84, and 89–90 (GT). Asp-114 serves as a coordination point for Mg(2+). UDP-N-acetyl-alpha-D-glucosamine-binding residues include Gly-152, Glu-167, Asn-182, and Asn-239. Asn-239 contributes to the Mg(2+) binding site. A linker region spans residues 242–262 (AQLAAAEEVLYGRIADRLRKS). The N-acetyltransferase stretch occupies residues 263-473 (GVTIRTSARI…KARLKDAAKK (211 aa)). Positions 343 and 361 each coordinate UDP-N-acetyl-alpha-D-glucosamine. His-373 acts as the Proton acceptor in catalysis. Residues Tyr-376 and Asn-387 each coordinate UDP-N-acetyl-alpha-D-glucosamine. Acetyl-CoA-binding positions include Ala-390, 396–397 (NY), Ser-415, Thr-433, and Arg-450.

The protein in the N-terminal section; belongs to the N-acetylglucosamine-1-phosphate uridyltransferase family. It in the C-terminal section; belongs to the transferase hexapeptide repeat family. As to quaternary structure, homotrimer. Requires Mg(2+) as cofactor.

The protein resides in the cytoplasm. It catalyses the reaction alpha-D-glucosamine 1-phosphate + acetyl-CoA = N-acetyl-alpha-D-glucosamine 1-phosphate + CoA + H(+). The catalysed reaction is N-acetyl-alpha-D-glucosamine 1-phosphate + UTP + H(+) = UDP-N-acetyl-alpha-D-glucosamine + diphosphate. It participates in nucleotide-sugar biosynthesis; UDP-N-acetyl-alpha-D-glucosamine biosynthesis; N-acetyl-alpha-D-glucosamine 1-phosphate from alpha-D-glucosamine 6-phosphate (route II): step 2/2. Its pathway is nucleotide-sugar biosynthesis; UDP-N-acetyl-alpha-D-glucosamine biosynthesis; UDP-N-acetyl-alpha-D-glucosamine from N-acetyl-alpha-D-glucosamine 1-phosphate: step 1/1. It functions in the pathway bacterial outer membrane biogenesis; LPS lipid A biosynthesis. In terms of biological role, catalyzes the last two sequential reactions in the de novo biosynthetic pathway for UDP-N-acetylglucosamine (UDP-GlcNAc). The C-terminal domain catalyzes the transfer of acetyl group from acetyl coenzyme A to glucosamine-1-phosphate (GlcN-1-P) to produce N-acetylglucosamine-1-phosphate (GlcNAc-1-P), which is converted into UDP-GlcNAc by the transfer of uridine 5-monophosphate (from uridine 5-triphosphate), a reaction catalyzed by the N-terminal domain. The sequence is that of Bifunctional protein GlmU from Sorangium cellulosum (strain So ce56) (Polyangium cellulosum (strain So ce56)).